A 461-amino-acid chain; its full sequence is Polycomb group protein FIE1 (461 aa).

The span at 1–11 shows a compositional bias: basic residues; it reads MPPSKARRKRS. The tract at residues 1–56 is disordered; that stretch reads MPPSKARRKRSLRDITATVATGTVANSKPGSSSTNEGKQQDKKKEGPQEPDIPPLP. The segment covering 18 to 37 has biased composition (polar residues); it reads TVATGTVANSKPGSSSTNEG. The segment covering 38–47 has biased composition (basic and acidic residues); it reads KQQDKKKEGP. WD repeat units follow at residues 143-186, 189-229, 235-275, 301-338, 351-391, and 398-437; these read DKDE…LDKS, GHGG…CILV, GHRH…IYVE, VHSD…RRPG, PKCS…PVLI, and ECKS…ASSS. The disordered stretch occupies residues 429 to 461; it reads EVDPAASSSKPDQAAAPAAGVGAGAGADADADA. Low complexity predominate over residues 432–448; that stretch reads PAASSSKPDQAAAPAAG.

This sequence belongs to the WD repeat ESC family. In terms of tissue distribution, specifically expressed in kernel starting from 6 days after pollination.

Its subcellular location is the nucleus. In terms of biological role, polycomb group (PcG) protein. PcG proteins act by forming multiprotein complexes, which are required to maintain the transcriptionally repressive state of homeotic genes throughout development. PcG proteins are not required to initiate repression, but to maintain it during later stages of development. They probably act via the methylation of histones, rendering chromatin heritably changed in its expressibility. This Zea mays (Maize) protein is Polycomb group protein FIE1 (FIE1).